Reading from the N-terminus, the 740-residue chain is F-BAR and double SH3 domains protein 2 (740 aa).

An F-BAR domain is found at 8-282; the sequence is VKVTQELRNI…NSSKVVRDYN (275 aa). The tract at residues 303 to 323 is disordered; it reads PCDSDTSRQLESETGTTEEHS. Over residues 307 to 323 the composition is skewed to basic and acidic residues; that stretch reads DTSRQLESETGTTEEHS. Residues 356–397 adopt a coiled-coil conformation; it reads GVALSEQSRAELEQKIDEARESIRKAEIIKLKAEARLDLLKQ. 2 consecutive SH3 domains span residues 469 to 530 and 567 to 629; these read NYPL…FPTS and ASVC…ELSA. Residues 567–629 form a required and sufficient for location at clathrin-coated pits region; the sequence is ASVCFVKALY…PSVLVEELSA (63 aa). Positions 629–645 are enriched in polar residues; that stretch reads ASENGDTPWTREIQISP. Residues 629–740 are disordered; sequence ASENGDTPWT…KMEDVEITLV (112 aa). A compositionally biased stretch (pro residues) spans 646 to 657; that stretch reads SPKPHTSLPPLP. Ser675 and Ser681 each carry phosphoserine. Residues 675–706 show a composition bias toward polar residues; it reads SQFFPRSPSANENSLHAESPGFSQASRQTPDT.

In terms of assembly, homodimer. Interacts (via SH3 domain 2) with ITSN1 (via SH3 domain 4). Recruited to clathrin-coated pits during a mid-to-late stage of assembly via interaction with ITSN1. Interacts (via SH3 domain 1) with WASL. Interacts with WAS. Interacts with CASK and MAGI1. CASK inhibits interaction with MAGI1. Phosphorylated. Phosphorylation on a Ser residue is important for recruitment to the cell membrane and for its role in promoting endocytosis. In terms of tissue distribution, detected in inner ear vestibula and in stereocilia in cochlear hair cell bundles (at protein level). Ubiquitous. Detected in testis, liver, brain cortex, cerebellum, kidney, organ of Corti, utricle, spiral ganglion, tongue and eye.

The protein localises to the cytoplasm. Its subcellular location is the cell junction. The protein resides in the membrane. It localises to the clathrin-coated pit. It is found in the cell membrane. The protein localises to the cell projection. Its subcellular location is the stereocilium. In terms of biological role, adapter protein that plays a role in endocytosis via clathrin-coated pits. Contributes to the internalization of cell surface receptors, such as integrin ITGB1 and transferrin receptor. Promotes endocytosis of EGFR in cancer cells, and thereby contributes to the down-regulation of EGFR signaling. Recruited to clathrin-coated pits during a mid-to-late stage of assembly, where it is required for normal progress from U-shaped intermediate stage pits to terminal, omega-shaped pits. Binds to membranes enriched in phosphatidylinositol 3,4-bisphosphate or phosphatidylinositol 3,4,5-trisphosphate. When bound to membranes, promotes actin polymerization via its interaction with WAS and/or WASL which leads to the activation of the Arp2/3 complex. Does not promote actin polymerisation in the absence of membranes. The sequence is that of F-BAR and double SH3 domains protein 2 (Fchsd2) from Mus musculus (Mouse).